The following is a 368-amino-acid chain: Aminomethyltransferase (368 aa).

This sequence belongs to the GcvT family. In terms of assembly, the glycine cleavage system is composed of four proteins: P, T, L and H.

The catalysed reaction is N(6)-[(R)-S(8)-aminomethyldihydrolipoyl]-L-lysyl-[protein] + (6S)-5,6,7,8-tetrahydrofolate = N(6)-[(R)-dihydrolipoyl]-L-lysyl-[protein] + (6R)-5,10-methylene-5,6,7,8-tetrahydrofolate + NH4(+). Its function is as follows. The glycine cleavage system catalyzes the degradation of glycine. This is Aminomethyltransferase from Xylella fastidiosa (strain M12).